The chain runs to 397 residues: Phosphoglycerate kinase (397 aa).

Substrate is bound by residues 23–25, R38, 61–64, R122, and R155; these read DFN and HMGK. ATP contacts are provided by residues K206, G296, E327, and 353 to 356; that span reads GGDS.

Belongs to the phosphoglycerate kinase family. As to quaternary structure, monomer.

It is found in the cytoplasm. The enzyme catalyses (2R)-3-phosphoglycerate + ATP = (2R)-3-phospho-glyceroyl phosphate + ADP. It participates in carbohydrate degradation; glycolysis; pyruvate from D-glyceraldehyde 3-phosphate: step 2/5. The sequence is that of Phosphoglycerate kinase from Clostridium perfringens (strain SM101 / Type A).